We begin with the raw amino-acid sequence, 334 residues long: Lipoyl synthase (334 aa).

Residues 8 to 33 (LNNDTRPKVEAPARPRHPEKAHRPDT) are disordered. The segment covering 12–33 (TRPKVEAPARPRHPEKAHRPDT) has biased composition (basic and acidic residues). 7 residues coordinate [4Fe-4S] cluster: C68, C73, C79, C94, C98, C101, and S307. Residues 80-296 (WEKRHATFMI…ETTAYAKGFL (217 aa)) enclose the Radical SAM core domain.

This sequence belongs to the radical SAM superfamily. Lipoyl synthase family. [4Fe-4S] cluster serves as cofactor.

It is found in the cytoplasm. The catalysed reaction is [[Fe-S] cluster scaffold protein carrying a second [4Fe-4S](2+) cluster] + N(6)-octanoyl-L-lysyl-[protein] + 2 oxidized [2Fe-2S]-[ferredoxin] + 2 S-adenosyl-L-methionine + 4 H(+) = [[Fe-S] cluster scaffold protein] + N(6)-[(R)-dihydrolipoyl]-L-lysyl-[protein] + 4 Fe(3+) + 2 hydrogen sulfide + 2 5'-deoxyadenosine + 2 L-methionine + 2 reduced [2Fe-2S]-[ferredoxin]. The protein operates within protein modification; protein lipoylation via endogenous pathway; protein N(6)-(lipoyl)lysine from octanoyl-[acyl-carrier-protein]: step 2/2. Its function is as follows. Catalyzes the radical-mediated insertion of two sulfur atoms into the C-6 and C-8 positions of the octanoyl moiety bound to the lipoyl domains of lipoate-dependent enzymes, thereby converting the octanoylated domains into lipoylated derivatives. The protein is Lipoyl synthase of Methylorubrum populi (strain ATCC BAA-705 / NCIMB 13946 / BJ001) (Methylobacterium populi).